The chain runs to 348 residues: Type II methyltransferase M.BglI (348 aa).

The protein belongs to the N(4)/N(6)-methyltransferase family.

It catalyses the reaction a 2'-deoxycytidine in DNA + S-adenosyl-L-methionine = an N(4)-methyl-2'-deoxycytidine in DNA + S-adenosyl-L-homocysteine + H(+). A beta subtype methylase, recognizes the double-stranded sequence 5'-GCCNNNNNGGC-3', methylates C-2 on both strands, and protects the DNA from cleavage by the BglI endonuclease. The chain is Type II methyltransferase M.BglI (bglIM) from Bacillus subtilis.